A 259-amino-acid chain; its full sequence is Probable dihydroorotate dehydrogenase B (NAD(+)), electron transfer subunit (259 aa).

The region spanning 1 to 89 (MLPLNVTITQ…RGPFGKGFTL (89 aa)) is the FAD-binding FR-type domain. Positions 211, 216, 219, and 229 each coordinate [2Fe-2S] cluster.

It belongs to the PyrK family. Heterotetramer of 2 PyrK and 2 PyrD type B subunits. [2Fe-2S] cluster is required as a cofactor. FAD serves as cofactor.

It participates in pyrimidine metabolism; UMP biosynthesis via de novo pathway; orotate from (S)-dihydroorotate (NAD(+) route): step 1/1. Responsible for channeling the electrons from the oxidation of dihydroorotate from the FMN redox center in the PyrD type B subunit to the ultimate electron acceptor NAD(+). The polypeptide is Probable dihydroorotate dehydrogenase B (NAD(+)), electron transfer subunit (Methanosarcina acetivorans (strain ATCC 35395 / DSM 2834 / JCM 12185 / C2A)).